The chain runs to 156 residues: Male-specific protein scotti (156 aa).

Positions 26–48 (TADAGDDADTLEDGQQQQQQQHQ) are disordered. Asn137 carries an N-linked (GlcNAc...) asparagine glycan.

The protein belongs to the male-specific scotti family.

Post-meiotically transcribed gene that has a role in late spermiogenesis; required for actin cone progression during spermatid individualization. The chain is Male-specific protein scotti from Drosophila erecta (Fruit fly).